Reading from the N-terminus, the 254-residue chain is Thiazole synthase (254 aa).

The active-site Schiff-base intermediate with DXP is Lys-96. Residues Gly-157, 183–184 (AG), and 205–206 (NT) contribute to the 1-deoxy-D-xylulose 5-phosphate site.

This sequence belongs to the ThiG family. As to quaternary structure, homotetramer. Forms heterodimers with either ThiH or ThiS.

It localises to the cytoplasm. It carries out the reaction [ThiS sulfur-carrier protein]-C-terminal-Gly-aminoethanethioate + 2-iminoacetate + 1-deoxy-D-xylulose 5-phosphate = [ThiS sulfur-carrier protein]-C-terminal Gly-Gly + 2-[(2R,5Z)-2-carboxy-4-methylthiazol-5(2H)-ylidene]ethyl phosphate + 2 H2O + H(+). The protein operates within cofactor biosynthesis; thiamine diphosphate biosynthesis. Catalyzes the rearrangement of 1-deoxy-D-xylulose 5-phosphate (DXP) to produce the thiazole phosphate moiety of thiamine. Sulfur is provided by the thiocarboxylate moiety of the carrier protein ThiS. In vitro, sulfur can be provided by H(2)S. This is Thiazole synthase from Bacillus velezensis (strain DSM 23117 / BGSC 10A6 / LMG 26770 / FZB42) (Bacillus amyloliquefaciens subsp. plantarum).